Consider the following 331-residue polypeptide: Isopenicillin N synthase (331 aa).

Isopenicillin N contacts are provided by R87, Y91, S183, and Y189. R87, Y91, S183, Y189, H214, and D216 together coordinate N-[(5S)-5-amino-5-carboxypentanoyl]-L-cysteinyl-D-valine. A Fe2OG dioxygenase domain is found at 176 to 288 (KKEDALSSVV…RQSLPFFVNL (113 aa)). The Fe(2+) site is built by H214, D216, and H270. Residue R279 coordinates 2-oxoglutarate. An isopenicillin N-binding site is contributed by S281. S281 contributes to the N-[(5S)-5-amino-5-carboxypentanoyl]-L-cysteinyl-D-valine binding site.

It belongs to the iron/ascorbate-dependent oxidoreductase family. As to quaternary structure, monomer. Requires Fe(2+) as cofactor.

It is found in the cytoplasm. It localises to the cytosol. The catalysed reaction is N-[(5S)-5-amino-5-carboxypentanoyl]-L-cysteinyl-D-valine + O2 = isopenicillin N + 2 H2O. It functions in the pathway antibiotic biosynthesis; penicillin G biosynthesis; penicillin G from L-alpha-aminoadipate and L-cysteine and L-valine: step 2/3. Its function is as follows. Isopenicillin N synthase; part of the gene cluster that mediates the biosynthesis of penicillin, the world's most important antibiotic. IpnA catalyzes the cyclization of the tripeptide N-[(5S)-5-amino-5-carboxypentanoyl]-L-cysteinyl-D-valine (LLD-ACV or ACV) to form isopenicillin N (IPN) that contains the beta-lactam nucleus. The penicillin biosynthesis occurs via 3 enzymatic steps, the first corresponding to the production of the tripeptide N-[(5S)-5-amino-5-carboxypentanoyl]-L-cysteinyl-D-valine (LLD-ACV or ACV) by the NRPS acvA. The tripeptide ACV is then cyclized to isopenicillin N (IPN) by the isopenicillin N synthase ipnA that forms the beta-lactam nucleus. Finally, the alpha-aminoadipyl side chain is exchanged for phenylacetic acid by the isopenicillin N acyltransferase aatA to yield penicillin in the peroxisomal matrix. This chain is Isopenicillin N synthase, found in Penicillium chrysogenum (Penicillium notatum).